The primary structure comprises 374 residues: Queuine tRNA-ribosyltransferase (374 aa).

Residue D89 is the Proton acceptor of the active site. Residues D89–F93, D143, Q187, and G214 each bind substrate. Residues G245–D251 form an RNA binding region. The active-site Nucleophile is D264. The segment at T269–R273 is RNA binding; important for wobble base 34 recognition. Zn(2+) is bound by residues C302, C304, C307, and H333.

Belongs to the queuine tRNA-ribosyltransferase family. In terms of assembly, homodimer. Within each dimer, one monomer is responsible for RNA recognition and catalysis, while the other monomer binds to the replacement base PreQ1. Zn(2+) is required as a cofactor.

It catalyses the reaction 7-aminomethyl-7-carbaguanine + guanosine(34) in tRNA = 7-aminomethyl-7-carbaguanosine(34) in tRNA + guanine. It functions in the pathway tRNA modification; tRNA-queuosine biosynthesis. In terms of biological role, catalyzes the base-exchange of a guanine (G) residue with the queuine precursor 7-aminomethyl-7-deazaguanine (PreQ1) at position 34 (anticodon wobble position) in tRNAs with GU(N) anticodons (tRNA-Asp, -Asn, -His and -Tyr). Catalysis occurs through a double-displacement mechanism. The nucleophile active site attacks the C1' of nucleotide 34 to detach the guanine base from the RNA, forming a covalent enzyme-RNA intermediate. The proton acceptor active site deprotonates the incoming PreQ1, allowing a nucleophilic attack on the C1' of the ribose to form the product. After dissociation, two additional enzymatic reactions on the tRNA convert PreQ1 to queuine (Q), resulting in the hypermodified nucleoside queuosine (7-(((4,5-cis-dihydroxy-2-cyclopenten-1-yl)amino)methyl)-7-deazaguanosine). The sequence is that of Queuine tRNA-ribosyltransferase from Shewanella baltica (strain OS223).